The following is an 86-amino-acid chain: Large ribosomal subunit protein bL31B (86 aa).

The protein belongs to the bacterial ribosomal protein bL31 family. Type B subfamily. Part of the 50S ribosomal subunit.

The chain is Large ribosomal subunit protein bL31B from Cupriavidus taiwanensis (strain DSM 17343 / BCRC 17206 / CCUG 44338 / CIP 107171 / LMG 19424 / R1) (Ralstonia taiwanensis (strain LMG 19424)).